Here is a 223-residue protein sequence, read N- to C-terminus: Translation initiation factor 6 (223 aa).

This sequence belongs to the eIF-6 family.

Functionally, binds to the 50S ribosomal subunit and prevents its association with the 30S ribosomal subunit to form the 70S initiation complex. This is Translation initiation factor 6 from Saccharolobus islandicus (strain Y.N.15.51 / Yellowstone #2) (Sulfolobus islandicus).